The chain runs to 114 residues: Fumarate reductase subunit D (114 aa).

Helical transmembrane passes span 24 to 44, 50 to 70, and 92 to 112; these read VSAIFFPVVILIIGLLLPFGL, LITFAYSWIGKLVILVLTIFP, and GGFIFYGLATIYTVWVLFAVI.

Belongs to the FrdD family. Part of an enzyme complex containing four subunits: a flavoprotein (FrdA), an iron-sulfur protein (FrdB), and two hydrophobic anchor proteins (FrdC and FrdD).

Its subcellular location is the cell inner membrane. Functionally, anchors the catalytic components of the fumarate reductase complex to the cell membrane, binds quinones. The sequence is that of Fumarate reductase subunit D from Haemophilus influenzae (strain PittEE).